The chain runs to 436 residues: Trigger factor (436 aa).

One can recognise a PPIase FKBP-type domain in the interval 161–246 (EDQLNIDFVG…VNTVSEPKLP (86 aa)).

The protein belongs to the FKBP-type PPIase family. Tig subfamily.

It is found in the cytoplasm. The enzyme catalyses [protein]-peptidylproline (omega=180) = [protein]-peptidylproline (omega=0). Its function is as follows. Involved in protein export. Acts as a chaperone by maintaining the newly synthesized protein in an open conformation. Functions as a peptidyl-prolyl cis-trans isomerase. The chain is Trigger factor from Pseudomonas fluorescens (strain Pf0-1).